We begin with the raw amino-acid sequence, 80 residues long: VKSRYHQRQYRARKRYAKARRTKKPKRRPKPPRKLRYAPSKKQPKIMKLKLDNEVDNTLKAKNKSLNEALKNRLSLRKHV.

A compositionally biased stretch (basic residues) spans 1–36 (VKSRYHQRQYRARKRYAKARRTKKPKRRPKPPRKLR). The segment at 1-44 (VKSRYHQRQYRARKRYAKARRTKKPKRRPKPPRKLRYAPSKKQP) is disordered.

The protein resides in the nucleus. The protein localises to the chromosome. Functionally, involved in nuclear basic protein transition: histones are replaced by spermatid specific proteins which are themselves replaced by protamines in late spermatids. The polypeptide is Spermatid-specific protein S2 (Scyliorhinus canicula (Small-spotted catshark)).